We begin with the raw amino-acid sequence, 346 residues long: Large ribosomal subunit protein uL10 (346 aa).

Residues 307–346 (AAAVAKEPEKKEEVKEEEEEEEEEDHSEEDGMAGLGSLFG) are disordered. Positions 321-337 (KEEEEEEEEEDHSEEDG) are enriched in acidic residues.

This sequence belongs to the universal ribosomal protein uL10 family. As to quaternary structure, part of the 50S ribosomal subunit. Forms part of the ribosomal stalk which helps the ribosome interact with GTP-bound translation factors. Forms both a pentameric L10(L12)2(L12)2 and heptameric L10(L12)2(L12)2(L12)2 complex, where L10 forms an elongated spine to which the L12 dimers bind in a sequential fashion. The proportion of heptameric complexes increases during cell growth.

Its function is as follows. Forms part of the ribosomal stalk, playing a central role in the interaction of the ribosome with GTP-bound translation factors. This Methanosarcina barkeri (strain Fusaro / DSM 804) protein is Large ribosomal subunit protein uL10.